The chain runs to 260 residues: Adenosylcobinamide-GDP ribazoletransferase (260 aa).

The next 7 helical transmembrane spans lie at 42–62, 64–84, 117–137, 144–164, 192–212, 214–234, and 240–260; these read PLAGGILGLLAGVALLIANAI, LPPLAAALIAIGALAAMTGAL, FAALTLVIWTGVKASLLMAII, YALLALIGTEAASRAGMLAFW, GLGLALLAIGFLPSGGMVALI, ALVLMTVVLFGFARLCMAKIG, and TLGAAQQIGSLAALIGLVMAL.

Belongs to the CobS family. Requires Mg(2+) as cofactor.

The protein localises to the cell inner membrane. The catalysed reaction is alpha-ribazole + adenosylcob(III)inamide-GDP = adenosylcob(III)alamin + GMP + H(+). It catalyses the reaction alpha-ribazole 5'-phosphate + adenosylcob(III)inamide-GDP = adenosylcob(III)alamin 5'-phosphate + GMP + H(+). The protein operates within cofactor biosynthesis; adenosylcobalamin biosynthesis; adenosylcobalamin from cob(II)yrinate a,c-diamide: step 7/7. Its function is as follows. Joins adenosylcobinamide-GDP and alpha-ribazole to generate adenosylcobalamin (Ado-cobalamin). Also synthesizes adenosylcobalamin 5'-phosphate from adenosylcobinamide-GDP and alpha-ribazole 5'-phosphate. The sequence is that of Adenosylcobinamide-GDP ribazoletransferase from Brucella abortus (strain S19).